Consider the following 614-residue polypeptide: UvrABC system protein C (614 aa).

Residues 16–94 (SRPGVYRMFG…VKSLKPRFNV (79 aa)) enclose the GIY-YIG domain. Residues 204–239 (GELQKRLASEMEAASEAMEFETAARLRDRIRAIAHV) enclose the UVR domain.

It belongs to the UvrC family. Interacts with UvrB in an incision complex.

The protein resides in the cytoplasm. The UvrABC repair system catalyzes the recognition and processing of DNA lesions. UvrC both incises the 5' and 3' sides of the lesion. The N-terminal half is responsible for the 3' incision and the C-terminal half is responsible for the 5' incision. The chain is UvrABC system protein C from Hyphomonas neptunium (strain ATCC 15444).